Consider the following 318-residue polypeptide: Pantothenate kinase (318 aa).

Residue 96 to 103 (GSVAVGKS) coordinates ATP.

Belongs to the prokaryotic pantothenate kinase family.

The protein localises to the cytoplasm. The enzyme catalyses (R)-pantothenate + ATP = (R)-4'-phosphopantothenate + ADP + H(+). The protein operates within cofactor biosynthesis; coenzyme A biosynthesis; CoA from (R)-pantothenate: step 1/5. This is Pantothenate kinase from Rhodopseudomonas palustris (strain BisB5).